The following is a 224-amino-acid chain: Uracil phosphoribosyltransferase (224 aa).

A GTP-binding site is contributed by 38 to 42; sequence KGLVK. 5-phospho-alpha-D-ribose 1-diphosphate is bound by residues Arg87, Arg112, and 140–148; that span reads DPMIATGST. Residues Ile204 and 209–211 contribute to the uracil site; that span reads GDA. Asp210 contacts 5-phospho-alpha-D-ribose 1-diphosphate.

The protein belongs to the UPRTase family. It depends on Mg(2+) as a cofactor.

It carries out the reaction UMP + diphosphate = 5-phospho-alpha-D-ribose 1-diphosphate + uracil. It participates in pyrimidine metabolism; UMP biosynthesis via salvage pathway; UMP from uracil: step 1/1. With respect to regulation, allosterically activated by GTP. Catalyzes the conversion of uracil and 5-phospho-alpha-D-ribose 1-diphosphate (PRPP) to UMP and diphosphate. The protein is Uracil phosphoribosyltransferase of Thermococcus gammatolerans (strain DSM 15229 / JCM 11827 / EJ3).